Here is a 339-residue protein sequence, read N- to C-terminus: Proto-oncogene serine/threonine-protein kinase mos (339 aa).

The 275-residue stretch at 61–335 folds into the Protein kinase domain; the sequence is VCLLHRLGSG…LLQKDLKAFR (275 aa). ATP-binding positions include 67–75 and Lys-88; that span reads LGSGGFGSV. The Proton acceptor role is filled by Asp-196.

The protein belongs to the protein kinase superfamily. Ser/Thr protein kinase family. In terms of assembly, interacts with MAP2K1/MEK1. Expressed mainly in gonadal tissues, and cardiac and skeletal muscles.

It is found in the cytoplasm. It carries out the reaction L-seryl-[protein] + ATP = O-phospho-L-seryl-[protein] + ADP + H(+). The catalysed reaction is L-threonyl-[protein] + ATP = O-phospho-L-threonyl-[protein] + ADP + H(+). Functionally, serine/threonine kinase involved in the regulation of MAPK signaling. Is an activator of the ERK1/2 signaling cascade playing an essential role in the stimulation of oocyte maturation. The polypeptide is Proto-oncogene serine/threonine-protein kinase mos (Rattus norvegicus (Rat)).